A 285-amino-acid chain; its full sequence is NADPH-dependent 7-cyano-7-deazaguanine reductase (285 aa).

Position 91–93 (91–93 (IES)) interacts with substrate. Residue 93 to 94 (SK) coordinates NADPH. The Thioimide intermediate role is filled by Cys-191. Asp-198 functions as the Proton donor in the catalytic mechanism. A substrate-binding site is contributed by 230–231 (HE). An NADPH-binding site is contributed by 259–260 (RG).

The protein belongs to the GTP cyclohydrolase I family. QueF type 2 subfamily. In terms of assembly, homodimer.

Its subcellular location is the cytoplasm. It carries out the reaction 7-aminomethyl-7-carbaguanine + 2 NADP(+) = 7-cyano-7-deazaguanine + 2 NADPH + 3 H(+). The protein operates within tRNA modification; tRNA-queuosine biosynthesis. Catalyzes the NADPH-dependent reduction of 7-cyano-7-deazaguanine (preQ0) to 7-aminomethyl-7-deazaguanine (preQ1). This is NADPH-dependent 7-cyano-7-deazaguanine reductase from Legionella pneumophila (strain Lens).